Consider the following 290-residue polypeptide: Enoyl-CoA hydratase, mitochondrial (290 aa).

Residues 1–27 (MATLRVLLSCVRGPLRPPVRCPAWRPF) constitute a mitochondrion transit peptide. Position 46 is a phosphothreonine (T46). Position 98 to 101 (98 to 101 (ADIK)) interacts with substrate. Residue K101 is modified to N6-acetyllysine; alternate. At K101 the chain carries N6-succinyllysine; alternate. S114 is subject to Phosphoserine. Position 115 is an N6-acetyllysine; alternate (K115). K115 bears the N6-succinyllysine; alternate mark. Residue K118 is modified to N6-acetyllysine. Residue G141 participates in substrate binding. An N6-succinyllysine modification is found at K204. Position 211 is an N6-acetyllysine (K211).

Belongs to the enoyl-CoA hydratase/isomerase family. Homohexamer; dimer of trimers.

It is found in the mitochondrion matrix. It catalyses the reaction a (3S)-3-hydroxyacyl-CoA = a (2E)-enoyl-CoA + H2O. The enzyme catalyses a (3E)-enoyl-CoA = a 4-saturated (2E)-enoyl-CoA. The catalysed reaction is (3E)-hexenoyl-CoA = (2E)-hexenoyl-CoA. It carries out the reaction (3S)-3-hydroxybutanoyl-CoA = (2E)-butenoyl-CoA + H2O. It catalyses the reaction 3-hydroxyisovaleryl-CoA = 3-methylbut-2-enoyl-CoA + H2O. The enzyme catalyses 3-hydroxypropanoyl-CoA = acryloyl-CoA + H2O. The catalysed reaction is 3-hydroxybutanoyl-CoA = (2E)-butenoyl-CoA + H2O. It carries out the reaction 2-methylpropenoyl-CoA + H2O = (S)-3-hydroxyisobutanoyl-CoA. It catalyses the reaction (3S)-hydroxyhexanoyl-CoA = (2E)-hexenoyl-CoA + H2O. The enzyme catalyses (3S)-hydroxydecanoyl-CoA = (2E)-decenoyl-CoA + H2O. It functions in the pathway lipid metabolism; fatty acid beta-oxidation. Converts unsaturated trans-2-enoyl-CoA species ((2E)-enoyl-CoA) to the corresponding (3S)-3-hydroxyacyl-CoA species through addition of a water molecule to the double bond. Catalyzes the hydration of medium- and short-chained fatty enoyl-CoA thioesters from 4 carbons long (C4) up to C16. Has high substrate specificity for crotonyl-CoA ((2E)-butenoyl-CoA) and moderate specificity for acryloyl-CoA, 3-methylcrotonyl-CoA (3-methyl-(2E)-butenoyl-CoA) and methacrylyl-CoA ((2E)-2-methylpropenoyl-CoA). Can bind tiglyl-CoA (2-methylcrotonoyl-CoA), but hydrates only a small amount of this substrate. Plays a key role in the beta-oxidation spiral of short- and medium-chain fatty acid oxidation. At a lower rate than the hydratase reaction, catalyzes the isomerase reaction of trans-3-enoyl-CoA species (such as (3E)-hexenoyl-CoA) to trans-2-enoyl-CoA species (such as (2E)-hexenoyl-CoA), which are subsequently hydrated to 3(S)-3-hydroxyacyl-CoA species (such as (3S)-hydroxyhexanoyl-CoA). The polypeptide is Enoyl-CoA hydratase, mitochondrial (ECHS1) (Pongo abelii (Sumatran orangutan)).